The primary structure comprises 216 residues: Protein fmp32, mitochondrial (216 aa).

Positions 111-133 (RQEMVALHSQVEQLFSDVERLKT) form a coiled coil. A helical transmembrane segment spans residues 193–215 (TLQWVFGIVTGSGALLLAYVRLI).

Belongs to the CCDC90 family.

Its subcellular location is the mitochondrion. The protein resides in the membrane. This chain is Protein fmp32, mitochondrial (fmp32), found in Schizosaccharomyces pombe (strain 972 / ATCC 24843) (Fission yeast).